A 423-amino-acid polypeptide reads, in one-letter code: UDP-N-acetylglucosamine 1-carboxyvinyltransferase 1 (423 aa).

24–25 lines the phosphoenolpyruvate pocket; sequence KN. Arg-94 contacts UDP-N-acetyl-alpha-D-glucosamine. Residue Cys-118 is the Proton donor of the active site. Cys-118 bears the 2-(S-cysteinyl)pyruvic acid O-phosphothioketal mark. UDP-N-acetyl-alpha-D-glucosamine is bound by residues 123 to 127, Asp-309, and Ile-331; that span reads RPIDQ.

This sequence belongs to the EPSP synthase family. MurA subfamily.

It localises to the cytoplasm. It carries out the reaction phosphoenolpyruvate + UDP-N-acetyl-alpha-D-glucosamine = UDP-N-acetyl-3-O-(1-carboxyvinyl)-alpha-D-glucosamine + phosphate. Its pathway is cell wall biogenesis; peptidoglycan biosynthesis. In terms of biological role, cell wall formation. Adds enolpyruvyl to UDP-N-acetylglucosamine. The polypeptide is UDP-N-acetylglucosamine 1-carboxyvinyltransferase 1 (Staphylococcus haemolyticus (strain JCSC1435)).